The chain runs to 172 residues: Large ribosomal subunit protein uL10 (172 aa).

It belongs to the universal ribosomal protein uL10 family. Part of the ribosomal stalk of the 50S ribosomal subunit. The N-terminus interacts with L11 and the large rRNA to form the base of the stalk. The C-terminus forms an elongated spine to which L12 dimers bind in a sequential fashion forming a multimeric L10(L12)X complex.

Its function is as follows. Forms part of the ribosomal stalk, playing a central role in the interaction of the ribosome with GTP-bound translation factors. This chain is Large ribosomal subunit protein uL10, found in Nitrobacter hamburgensis (strain DSM 10229 / NCIMB 13809 / X14).